Reading from the N-terminus, the 290-residue chain is MSVIEIRSYQHWISTIPKSGYLAVDCYADWCGPCKAISPLFSQLASKYASPKFVFAKVNVDEQRQIASGLGVKAMPTFVFFENGKQIDMLTGANPQALKEKVALISSKATGTGALASSSSAPVKGFASLQGCIENPQLECLNQQDDHDLKSAFNSNPSSFLESDVDEQLMIYIPFLEVVKVHSIAITPVKGETSSAPKTIKLYINQPNNLSFEDAESFTPTQVIEDIVYEQDDQPTIIPLRFVKFQRVNSLVIFIYSNVGEEETTKISRLELFGEPVGDSSKGKLQKVEA.

The Thioredoxin domain maps to 24-104; that stretch reads VDCYADWCGP…PQALKEKVAL (81 aa). Cysteine 31 and cysteine 34 form a disulfide bridge. The PITH domain occupies 118-290; sequence SSSAPVKGFA…SKGKLQKVEA (173 aa).

The protein resides in the cytoplasm. The protein localises to the nucleus. Its function is as follows. Has a role in cellular detoxification of alkyl hydroperoxide. This chain is Thioredoxin-like protein 1 (txl1), found in Schizosaccharomyces pombe (strain 972 / ATCC 24843) (Fission yeast).